The chain runs to 146 residues: MGRFIFISFGLLVVFLSLSGTEADCLPDWFHYEGHCYRVFDEPKTWADAEKFCSEQANGGHLVSVHSRKEAGLVGVLAYQTLESPIVWMGLSKVWNQCDWGWTNGAKLKYEARAEESYCIHITSKKKEWKSLPCRNYGHFVCKSPA.

The N-terminal stretch at 1–23 (MGRFIFISFGLLVVFLSLSGTEA) is a signal peptide. 3 disulfides stabilise this stretch: cysteine 25–cysteine 36, cysteine 53–cysteine 142, and cysteine 119–cysteine 134. The C-type lectin domain occupies 32-143 (YEGHCYRVFD…CRNYGHFVCK (112 aa)).

This sequence belongs to the snaclec family. As to quaternary structure, heterodimer; disulfide-linked. As to expression, expressed by the venom gland.

It is found in the secreted. Its function is as follows. Interferes with one step of hemostasis (modulation of platelet aggregation, or coagulation cascade, for example). The protein is Snaclec 1 of Bitis arietans (African puff adder).